The sequence spans 165 residues: MPVINTHQNIAAFLDMLAVSEGTANHPLTKNRGYDVIVTGLDGKPEIFTDYSDHPFAHGRPAKVFNRRGEKSTASGRYQQLYLFWPHYRKQLALPDFSPLSQDRLAIQLIRERGALDDIRAGRIERAISRCRNIWASLPGAGYGQREHSLEKLVTVWRTAGGVPA.

The active site involves Glu21.

The protein belongs to the glycosyl hydrolase 24 family. Monomer.

Its subcellular location is the host cytoplasm. It catalyses the reaction Endolytic cleavage of the (1-&gt;4)-beta-glycosidic linkage between N-acetylmuramic acid (MurNAc) and N-acetylglucosamine (GlcNAc) residues in peptidoglycan with concomitant formation of a 1,6-anhydrobond in the MurNAc residue.. In terms of biological role, endolysin with transglycosylase activity that degrades host peptidoglycans and participates with the holin and spanin proteins in the sequential events which lead to the programmed host cell lysis releasing the mature viral particles. Once the holin has permeabilized the host cell membrane, the endolysin can reach the periplasm and break down the peptidoglycan layer. This is Endolysin (K) from Enterobacteriaceae (Bacteriophage P2).